A 95-amino-acid chain; its full sequence is Integration host factor subunit beta (95 aa).

It belongs to the bacterial histone-like protein family. As to quaternary structure, heterodimer of an alpha and a beta chain.

This protein is one of the two subunits of integration host factor, a specific DNA-binding protein that functions in genetic recombination as well as in transcriptional and translational control. This Ruegeria sp. (strain TM1040) (Silicibacter sp.) protein is Integration host factor subunit beta.